The primary structure comprises 1792 residues: D-lysergyl-peptide-synthetase subunit 3 (1792 aa).

The interval 239-642 (FRQRCDLHPN…GRKDSQIKIR (404 aa)) is adenylation (A) domain. Residues 779-853 (SNEEHRLQRM…DLARKASQSV (75 aa)) form the Carrier domain. The residue at position 813 (Ser-813) is an O-(pantetheine 4'-phosphoryl)serine. The interval 895–1285 (EDIYPCTPMQ…HILGQIHGKE (391 aa)) is condensation (C) domain. Residues 1415 to 1640 (VTGANGFIGT…AGEFNSSAGS (226 aa)) form a reductase (R) domain region.

This sequence belongs to the NRP synthetase family.

It functions in the pathway alkaloid biosynthesis; ergot alkaloid biosynthesis. In terms of biological role, D-lysergyl-peptide-synthetase subunit 3; part of the gene cluster that mediates the biosynthesis of fungal ergot alkaloid. DmaW catalyzes the first step of ergot alkaloid biosynthesis by condensing dimethylallyl diphosphate (DMAP) and tryptophan to form 4-dimethylallyl-L-tryptophan. The second step is catalyzed by the methyltransferase easF that methylates 4-dimethylallyl-L-tryptophan in the presence of S-adenosyl-L-methionine, resulting in the formation of 4-dimethylallyl-L-abrine. The catalase easC and the FAD-dependent oxidoreductase easE then transform 4-dimethylallyl-L-abrine to chanoclavine-I which is further oxidized by easD in the presence of NAD(+), resulting in the formation of chanoclavine-I aldehyde. Agroclavine dehydrogenase easG then mediates the conversion of chanoclavine-I aldehyde to agroclavine via a non-enzymatic adduct reaction: the substrate is an iminium intermediate that is formed spontaneously from chanoclavine-I aldehyde in the presence of glutathione. The presence of easA is not required to complete this reaction. Further conversion of agroclavine to paspalic acid is a two-step process involving oxidation of agroclavine to elymoclavine and of elymoclavine to paspalic acid, the second step being performed by the elymoclavine oxidase cloA. Paspalic acid is then further converted to D-lysergic acid. Ergopeptines are assembled from D-lysergic acid and three different amino acids by the D-lysergyl-peptide-synthetases composed each of a monomudular and a trimodular nonribosomal peptide synthetase subunit. LpsB and lpsC encode the monomodular subunits responsible for D-lysergic acid activation and incorporation into the ergopeptine backbone. LpsA1 and A2 subunits encode the trimodular nonribosomal peptide synthetase assembling the tripeptide portion of ergopeptines. LpsA1 is responsible for formation of the major ergopeptine, ergotamine, and lpsA2 for alpha-ergocryptine, the minor ergopeptine of the total alkaloid mixture elaborated by C.purpurea. D-lysergyl-tripeptides are assembled by the nonribosomal peptide synthetases and released as N-(D-lysergyl-aminoacyl)-lactams. Cyclolization of the D-lysergyl-tripeptides is performed by the Fe(2+)/2-ketoglutarate-dependent dioxygenase easH which introduces a hydroxyl group into N-(D-lysergyl-aminoacyl)-lactam at alpha-C of the aminoacyl residue followed by spontaneous condensation with the terminal lactam carbonyl group. In Claviceps purpurea (strain 20.1) (Ergot fungus), this protein is D-lysergyl-peptide-synthetase subunit 3.